The following is a 210-amino-acid chain: Thymidylate kinase (210 aa).

9–16 (GLEGAGKS) is a binding site for ATP.

This sequence belongs to the thymidylate kinase family.

The catalysed reaction is dTMP + ATP = dTDP + ADP. Its function is as follows. Phosphorylation of dTMP to form dTDP in both de novo and salvage pathways of dTTP synthesis. The chain is Thymidylate kinase from Aliivibrio salmonicida (strain LFI1238) (Vibrio salmonicida (strain LFI1238)).